The primary structure comprises 1407 residues: DNA-directed RNA polymerase subunit beta' (1407 aa).

Zn(2+) contacts are provided by Cys70, Cys72, Cys85, and Cys88. The Mg(2+) site is built by Asp460, Asp462, and Asp464. Residues Cys814, Cys888, Cys895, and Cys898 each contribute to the Zn(2+) site. Residue Lys972 is modified to N6-acetyllysine.

It belongs to the RNA polymerase beta' chain family. In terms of assembly, the RNAP catalytic core consists of 2 alpha, 1 beta, 1 beta' and 1 omega subunit. When a sigma factor is associated with the core the holoenzyme is formed, which can initiate transcription. Requires Mg(2+) as cofactor. Zn(2+) is required as a cofactor.

It catalyses the reaction RNA(n) + a ribonucleoside 5'-triphosphate = RNA(n+1) + diphosphate. DNA-dependent RNA polymerase catalyzes the transcription of DNA into RNA using the four ribonucleoside triphosphates as substrates. This is DNA-directed RNA polymerase subunit beta' from Shigella boydii serotype 18 (strain CDC 3083-94 / BS512).